The sequence spans 314 residues: MIOREX complex component 8 (314 aa).

Positions 132 to 312 constitute an EngB-type G domain; it reads TLPEVIFLGG…RYVIFQSCGL (181 aa). GTP contacts are provided by residues 140–147, 173–177, 191–194, 253–256, and 290–292; these read GGTNVGKS, GFTKT, DSPG, TKMD, and SST. Mg(2+)-binding residues include Ser147 and Thr175.

Belongs to the TRAFAC class TrmE-Era-EngA-EngB-Septin-like GTPase superfamily. EngB GTPase family. As to quaternary structure, associates with the mitochondrial ribosome. Requires Mg(2+) as cofactor. Post-translationally, sumoylated upon ethanol stress.

Its subcellular location is the mitochondrion. Component of MIOREX complexes, large expressome-like assemblies of ribosomes with factors involved in all the steps of post-transcriptional gene expression. In Saccharomyces cerevisiae (strain ATCC 204508 / S288c) (Baker's yeast), this protein is MIOREX complex component 8.